Here is a 2531-residue protein sequence, read N- to C-terminus: Neurogenic locus notch homolog protein 1 (2531 aa).

The signal sequence occupies residues 1-18 (MPRLLTPLLCLTLLPALA). At 19-1725 (ARGLRCSQPS…VEPPLPSQLH (1707 aa)) the chain is on the extracellular side. EGF-like domains follow at residues 20–58 (RGLRCSQPSGTCLNGGRCEVANGTEACVCSGAFVGQRCQ), 59–99 (DSNP…PLCL), 102–139 (LDNACLANPCRNGGTCDLLTLTEYKCRCPPGWSGKSCQ), and 140–176 (QADPCASNPCANGGQCLPFESSYICRCPPGFHGPTCR). Intrachain disulfides connect cysteine 24–cysteine 37, cysteine 31–cysteine 46, cysteine 63–cysteine 74, cysteine 68–cysteine 87, cysteine 89–cysteine 98, cysteine 106–cysteine 117, cysteine 111–cysteine 127, cysteine 129–cysteine 138, cysteine 144–cysteine 155, cysteine 149–cysteine 164, cysteine 166–cysteine 175, cysteine 182–cysteine 195, cysteine 189–cysteine 204, cysteine 206–cysteine 215, cysteine 222–cysteine 233, cysteine 227–cysteine 243, cysteine 245–cysteine 254, cysteine 261–cysteine 272, cysteine 266–cysteine 281, cysteine 283–cysteine 292, cysteine 299–cysteine 312, cysteine 306–cysteine 321, cysteine 323–cysteine 332, cysteine 339–cysteine 350, cysteine 344–cysteine 359, cysteine 361–cysteine 370, cysteine 376–cysteine 387, cysteine 381–cysteine 398, cysteine 400–cysteine 409, cysteine 416–cysteine 429, cysteine 423–cysteine 438, and cysteine 440–cysteine 449. The O-linked (Glc...) serine glycan is linked to serine 65. The O-linked (Fuc...) threonine glycan is linked to threonine 73. Residue threonine 116 is glycosylated (O-linked (Fuc...) threonine). O-linked (Glc...) serine glycosylation is present at serine 146. An EGF-like 5; calcium-binding domain is found at 178 to 216 (DVNECSQNPGLCRHGGTCHNEIGSYRCACRATHTGPHCE). Threonine 194 carries O-linked (Fuc...) threonine glycosylation. In terms of domain architecture, EGF-like 6 spans 218–255 (PYVPCSPSPCQNGGTCRPTGDTTHECACLPGFAGQNCE). Threonine 232 carries an O-linked (Fuc...) threonine; alternate glycan. O-linked (GalNAc...) threonine; alternate glycosylation is present at threonine 232. Residues 257 to 293 (NVDDCPGNNCKNGGACVDGVNTYNCRCPPEWTGQYCT) form the EGF-like 7; calcium-binding domain. The EGF-like 8; calcium-binding domain maps to 295 to 333 (DVDECQLMPNACQNGGTCHNTHGGYNCVCVNGWTGEDCS). An O-linked (Fuc...) threonine glycan is attached at threonine 311. The 37-residue stretch at 335 to 371 (NIDDCASAACFQGATCHDRVASFYCECPHGRTGLLCH) folds into the EGF-like 9; calcium-binding domain. Serine 341 is a glycosylation site (O-linked (Glc...) serine). Threonine 349 carries O-linked (Fuc...) threonine glycosylation. The EGF-like 10; calcium-binding domain occupies 372–410 (LNDACISNPCNEGSNCDTNPVNGKAICTCPSGYTGPACS). An O-linked (Glc...) serine glycan is attached at serine 378. In terms of domain architecture, EGF-like 11; calcium-binding spans 412-450 (DVDECALGANPCEHAGKCLNTLGSFECQCLQGYTGPRCE). Positions 420–421 (AN) are interaction with DLL4. Ca(2+) contacts are provided by threonine 432 and serine 435. O-linked (Glc...) serine glycosylation is present at serine 435. Residues 448 to 452 (RCEID) are interaction with DLL4. Ca(2+) contacts are provided by aspartate 452, valine 453, and glutamate 455. Positions 452-488 (DVNECISNPCQNDATCLDQIGEFQCICMPGYEGVYCE) constitute an EGF-like 12; calcium-binding domain. Cystine bridges form between cysteine 456–cysteine 467, cysteine 461–cysteine 476, and cysteine 478–cysteine 487. O-linked (Glc...) serine glycosylation is present at serine 458. Threonine 466 carries an O-linked (Fuc...) threonine glycan. Ca(2+) is bound by residues aspartate 469 and glutamine 470. Positions 490, 491, and 493 each coordinate Ca(2+). Residues 490–526 (NTDECASSPCLHNGHCMDKINEFQCQCPKGFNGHLCQ) form the EGF-like 13; calcium-binding domain. Intrachain disulfides connect cysteine 494–cysteine 505, cysteine 499–cysteine 514, cysteine 516–cysteine 525, cysteine 532–cysteine 543, cysteine 537–cysteine 552, cysteine 554–cysteine 563, cysteine 570–cysteine 580, cysteine 575–cysteine 589, cysteine 591–cysteine 600, cysteine 607–cysteine 618, cysteine 612–cysteine 627, cysteine 629–cysteine 638, cysteine 645–cysteine 655, cysteine 650–cysteine 664, cysteine 666–cysteine 675, cysteine 682–cysteine 693, cysteine 687–cysteine 702, cysteine 704–cysteine 713, cysteine 720–cysteine 730, cysteine 725–cysteine 739, cysteine 741–cysteine 750, cysteine 757–cysteine 768, cysteine 762–cysteine 777, cysteine 779–cysteine 788, cysteine 795–cysteine 806, cysteine 800–cysteine 815, cysteine 817–cysteine 826, cysteine 833–cysteine 844, cysteine 838–cysteine 855, cysteine 857–cysteine 866, cysteine 873–cysteine 884, cysteine 878–cysteine 893, cysteine 895–cysteine 904, cysteine 911–cysteine 922, cysteine 916–cysteine 931, cysteine 933–cysteine 942, cysteine 949–cysteine 960, cysteine 954–cysteine 969, cysteine 971–cysteine 980, cysteine 987–cysteine 998, cysteine 992–cysteine 1007, cysteine 1009–cysteine 1018, cysteine 1025–cysteine 1036, cysteine 1030–cysteine 1045, cysteine 1047–cysteine 1056, cysteine 1063–cysteine 1074, cysteine 1068–cysteine 1083, cysteine 1085–cysteine 1094, cysteine 1101–cysteine 1122, cysteine 1116–cysteine 1131, cysteine 1133–cysteine 1142, cysteine 1149–cysteine 1160, cysteine 1154–cysteine 1169, cysteine 1171–cysteine 1180, cysteine 1187–cysteine 1198, cysteine 1192–cysteine 1207, cysteine 1209–cysteine 1218, cysteine 1225–cysteine 1244, cysteine 1238–cysteine 1253, cysteine 1255–cysteine 1264, cysteine 1271–cysteine 1284, cysteine 1276–cysteine 1293, cysteine 1295–cysteine 1304, cysteine 1311–cysteine 1322, cysteine 1316–cysteine 1334, cysteine 1336–cysteine 1345, cysteine 1352–cysteine 1363, cysteine 1357–cysteine 1372, cysteine 1374–cysteine 1383, cysteine 1391–cysteine 1403, cysteine 1397–cysteine 1414, cysteine 1416–cysteine 1425, cysteine 1449–cysteine 1472, cysteine 1454–cysteine 1467, and cysteine 1463–cysteine 1479. O-linked (Glc...) serine glycosylation is present at serine 496. Ca(2+) is bound by residues aspartate 507 and lysine 508. The region spanning 528 to 564 (DVDECASTPCKNGAKCLDGPNTYTCVCTEGYTGTHCE) is the EGF-like 14; calcium-binding domain. O-linked (Glc...) serine glycosylation occurs at serine 534. The 36-residue stretch at 566–601 (DIDECDPDPCHYGSCKDGVATFTCLCQPGYTGHHCE) folds into the EGF-like 15; calcium-binding domain. Residues 603 to 639 (NINECHSQPCRHGGTCQDRDNSYLCLCLKGTTGPNCE) form the EGF-like 16; calcium-binding domain. The O-linked (Glc...) serine glycan is linked to serine 609. O-linked (Fuc...) threonine glycosylation is present at threonine 617. The 36-residue stretch at 641 to 676 (NLDDCASNPCDSGTCLDKIDGYECACEPGYTGSMCN) folds into the EGF-like 17; calcium-binding domain. Residue serine 647 is glycosylated (O-linked (Glc...) serine). Positions 678-714 (NIDECAGSPCHNGGTCEDGIAGFTCRCPEGYHDPTCL) constitute an EGF-like 18; calcium-binding domain. Threonine 692 carries an O-linked (Fuc...) threonine glycan. An EGF-like 19; calcium-binding domain is found at 716–751 (EVNECNSNPCIHGACRDGLNGYKCDCAPGWSGTNCD). Residue serine 722 is glycosylated (O-linked (Glc...) serine). The EGF-like 20; calcium-binding domain occupies 753–789 (NNNECESNPCVNGGTCKDMTSGYVCTCREGFSGPNCQ). Serine 759 carries an O-linked (Glc...) serine glycan. Threonine 767 is a glycosylation site (O-linked (Fuc...) threonine). O-linked (GlcNAc) serine glycosylation is present at serine 784. The region spanning 791–827 (NINECASNPCLNQGTCIDDVAGYKCNCPLPYTGATCE) is the EGF-like 21; calcium-binding domain. A glycan (O-linked (Glc...) serine) is linked at serine 797. Threonine 805 is a glycosylation site (O-linked (Fuc...) threonine). The EGF-like 22 domain occupies 829–867 (VLAPCATSPCKNSGVCKESEDYESFSCVCPTGWQGQTCE). An EGF-like 23; calcium-binding domain is found at 869–905 (DINECVKSPCRHGASCQNTNGSYRCLCQAGYTGRNCE). N-linked (GlcNAc...) asparagine glycosylation is present at asparagine 888. Threonine 900 is a glycosylation site (O-linked (GlcNAc) threonine). The region spanning 907–943 (DIDDCRPNPCHNGGSCTDGINTAFCDCLPGFQGAFCE) is the EGF-like 24 domain. Serine 921 carries an O-linked (Fuc) serine glycan. An EGF-like 25; calcium-binding domain is found at 945 to 981 (DINECASNPCQNGANCTDCVDSYTCTCPVGFNGIHCE). The O-linked (Glc...) serine glycan is linked to serine 951. N-linked (GlcNAc...) asparagine glycosylation occurs at asparagine 959. The region spanning 983-1019 (NTPDCTESSCFNGGTCVDGINSFTCLCPPGFTGSYCQ) is the EGF-like 26 domain. O-linked (Fuc...) threonine glycosylation is present at threonine 997. The EGF-like 27; calcium-binding domain occupies 1021–1057 (DVNECDSRPCLHGGTCQDSYGTYKCTCPQGYTGLNCQ). The O-linked (Glc...) serine glycan is linked to serine 1027. A glycan (O-linked (Fuc...) threonine) is linked at threonine 1035. EGF-like domains follow at residues 1059-1095 (LVRWCDSAPCKNGGRCWQTNTQYHCECRSGWTGVNCD) and 1097-1143 (LSVS…SYCE). Serine 1065 is a glycosylation site (O-linked (Glc...) serine). Positions 1145–1181 (EVDECSPNPCQNGATCTDYLGGFSCKCVAGYHGSNCS) constitute an EGF-like 30; calcium-binding domain. Threonine 1159 is a glycosylation site (O-linked (Fuc...) threonine). N-linked (GlcNAc...) asparagine glycosylation occurs at asparagine 1179. An EGF-like 31; calcium-binding domain is found at 1183 to 1219 (EINECLSQPCQNGGTCIDLTNSYKCSCPRGTQGVHCE). Serine 1189 carries an O-linked (Glc...) serine glycan. O-linked (Fuc...) threonine glycosylation is present at threonine 1197. An EGF-like 32; calcium-binding domain is found at 1221 to 1265 (NVDDCHPPLDPASRSPKCFNNGTCVDQVGGYTCTCPPGFVGERCE). Asparagine 1241 carries N-linked (GlcNAc...) asparagine glycosylation. EGF-like domains are found at residues 1267-1305 (DVNECLSNPCDPRGTQNCVQRVNDFHCECRAGHTGRRCE), 1307-1346 (VINGCRGKPCKNGGVCAVASNTARGFICRCPAGFEGATCE), 1348-1384 (DARTCGSLRCLNGGTCISGPRSPTCLCLGSFTGPECQ), and 1387-1426 (ASSPCVGSNPCYNQGTCEPTSENPFYRCLCPAKFNGLLCH). Serine 1273 carries an O-linked (Glc...) serine glycan. The O-linked (Fuc...) threonine glycan is linked to threonine 1362. Threonine 1379 is a glycosylation site (O-linked (GlcNAc...) threonine). Threonine 1402 carries an O-linked (Fuc...) threonine; alternate glycan. An O-linked (GalNAc...) threonine; alternate glycan is attached at threonine 1402. 3 LNR repeats span residues 1449–1489 (CELP…PWKN), 1490–1531 (CTQS…CNPL), and 1532–1571 (YDQYCKDHFSDGHCDQGCNSAECEWDGLDCAEHVPERLAA). Positions 1457, 1460, 1475, and 1478 each coordinate Ca(2+). Asparagine 1489 carries an N-linked (GlcNAc...) asparagine glycan. Disulfide bonds link cysteine 1490-cysteine 1514, cysteine 1496-cysteine 1509, cysteine 1505-cysteine 1521, cysteine 1536-cysteine 1549, and cysteine 1545-cysteine 1561. The N-linked (GlcNAc...) asparagine glycan is linked to asparagine 1587. Residues 1718-1750 (PPLPSQLHLMYVAAAAFVLLFFVGCGVLLSRKR) form an interaction with PSEN1 region. A helical membrane pass occupies residues 1726-1746 (LMYVAAAAFVLLFFVGCGVLL). Residues 1747 to 2531 (SRKRRRQHGQ…QITHIPEAFK (785 aa)) are Cytoplasmic-facing. A Glycyl lysine isopeptide (Lys-Gly) (interchain with G-Cter in ubiquitin) cross-link involves residue lysine 1749. The tract at residues 1770 to 1798 (KKKRREPLGEDSVGLKPLKNASDGALMDD) is disordered. Threonine 1851 bears the Phosphothreonine mark. ANK repeat units follow at residues 1917 to 1946 (TGETALHLAARYSRSDAAKRLLEASADANI), 1950 to 1980 (MGRTPLHAAVSADAQGVFQILLRNRATDLDA), 1984 to 2013 (DGTTPLILAARLAVEGMLEDLINSHADVNA), 2017 to 2046 (LGKSALHWAAAVNNVDAAVVLLKNGANKDM), and 2050 to 2079 (KEETPLFLAAREGSYETAKVLLDHFANRDI). The HIF1AN-binding stretch occupies residues 1937–1945 (LLEASADAN). The residue at position 1945 (asparagine 1945) is a (3S)-3-hydroxyasparagine; by HIF1AN; partial. An HIF1AN-binding region spans residues 2004-2012 (LINSHADVN). Asparagine 2012 bears the (3S)-3-hydroxyasparagine; by HIF1AN; partial mark. Disordered stretches follow at residues 2140-2185 (KSAT…DSSS), 2382-2428 (QPQN…SLPV), and 2440-2531 (PTSL…EAFK). Low complexity predominate over residues 2382 to 2395 (QPQNLQPPSQPHLS). Positions 2440–2478 (PTSLPSSMVPPMTTTQFLTPPSQHSYSSSPVDNTPSHQL) are enriched in polar residues. A compositionally biased stretch (low complexity) spans 2488-2503 (PSPESPDQWSSSSPHS). The segment covering 2504–2524 (NISDWSEGISSPPTTMPSQIT) has biased composition (polar residues).

This sequence belongs to the NOTCH family. Heterodimer of a C-terminal fragment N(TM) and an N-terminal fragment N(EC) which are probably linked by disulfide bonds. Interacts with DNER, DTX1, DTX2 and RBPJ/RBPSUH. Also interacts with MAML1, MAML2 and MAML3 which act as transcriptional coactivators for NOTCH1. Notch 1 intracellular domain interacts with SNW1; the interaction involves multimerized NOTCH1 NICD and is implicated in a formation of an intermediate preactivation complex which associates with DNA-bound CBF-1/RBPJ. The activated membrane-bound form interacts with AAK1 which promotes NOTCH1 stabilization. Forms a trimeric complex with FBXW7 and SGK1. Interacts with HIF1AN. HIF1AN negatively regulates the function of notch intracellular domain (NICD), accelerating myogenic differentiation. Interacts (via NICD) with SNAI1 (via zinc fingers); the interaction induces SNAI1 degradation via MDM2-mediated ubiquitination and inhibits SNAI1-induced cell invasion. Interacts (via NICD) with MDM2A. Interacts (via NICD) with BCL6; the interaction decreases MAML1 recruitment by NOTCH1 NICD on target genes DNA and inhibits NOTCH1 transactivation activity. Interacts with THBS4. Interacts (via the EGF-like repeat region) with CCN3 (via CTCK domain). Interacts (via EGF-like domains) with DLL4 (via N-terminal DSL and MNNL domains). Interacts with ZMIZ1. Interacts (via NICD domain) with MEGF10 (via the cytoplasmic domain). Interacts with DLL1 and JAG1. Interacts (via NICD domain) with PRAG1. Forms a complex with PRAG1, N1ICD and MAML1, in a MAML1-dependent manner. Interacts (via transmembrane region) with PSEN1; the interaction is direct. Interacts with ZFP64. Synthesized in the endoplasmic reticulum as an inactive form which is proteolytically cleaved by a furin-like convertase in the trans-Golgi network before it reaches the plasma membrane to yield an active, ligand-accessible form. Cleavage results in a C-terminal fragment N(TM) and a N-terminal fragment N(EC). Following ligand binding, it is cleaved by ADAM17 to yield a membrane-associated intermediate fragment called notch extracellular truncation (NEXT). Following endocytosis, this fragment is then cleaved by one of the catalytic subunits of gamma-secretase (PSEN1 or PSEN2) to release a Notch-derived peptide containing the intracellular domain (NICD) from the membrane. Post-translationally, phosphorylated. In terms of processing, O-linked glycosylation by GALNT11 is involved in determination of left/right symmetry: glycosylation promotes activation of NOTCH1, possibly by promoting cleavage by ADAM17, modulating the balance between motile and immotile (sensory) cilia at the left-right organiser (LRO). O-glycosylated on the EGF-like domains. O-glucosylated at Ser-435 by KDELC1 and KDELC2. Contains both O-linked fucose and O-linked glucose in the EGF-like domains 11, 12 and 13, which are interacting with the residues on DLL4. O-glycosylation at Ser-1027 is only partial. MFNG-, RFNG- and LFNG-mediated modification of O-fucose residues at specific EGF-like domains results in inhibition of its activation by JAG1 and enhancement of its activation by DLL1 via an increased binding to DLL1. Ubiquitinated. Undergoes 'Lys-29'-linked polyubiquitination by ITCH; promotes the lysosomal degradation of non-activated internalized NOTCH1. Deubiquitination by USP12 is required for transport of internalized non-activated receptor from late endosomes to lysosomes for degradation. Monoubiquitination at Lys-1749 is required for activation by gamma-secretase cleavage, it promotes interaction with AAK1, which stabilizes it. Deubiquitination by EIF3F is necessary for nuclear import of activated Notch. Post-translationally, hydroxylated at Asn-1945 and Asn-2012 by HIF1AN. Hydroxylation reduces affinity for HI1AN and may thus indirectly modulate negative regulation of NICD. Highly expressed in the brain, lung and thymus. Expressed at lower levels in the spleen, bone-marrow, spinal cord, eyes, mammary gland, liver, intestine, skeletal muscle, kidney and heart. In the hair follicle, highly expressed exclusively in the epithelial compartment.

It localises to the cell membrane. It is found in the late endosome membrane. Its subcellular location is the nucleus. In terms of biological role, functions as a receptor for membrane-bound ligands Jagged-1 (JAG1), Jagged-2 (JAG2) and Delta-1 (DLL1) to regulate cell-fate determination. Upon ligand activation through the released notch intracellular domain (NICD) it forms a transcriptional activator complex with RBPJ/RBPSUH and activates genes of the enhancer of split locus. Affects the implementation of differentiation, proliferation and apoptotic programs. Involved in angiogenesis; negatively regulates endothelial cell proliferation and migration and angiogenic sprouting. Involved in the maturation of both CD4(+) and CD8(+) cells in the thymus. Important for follicular differentiation and possibly cell fate selection within the follicle. During cerebellar development, functions as a receptor for neuronal DNER and is involved in the differentiation of Bergmann glia. Represses neuronal and myogenic differentiation. May play an essential role in postimplantation development, probably in some aspect of cell specification and/or differentiation. May be involved in mesoderm development, somite formation and neurogenesis. May enhance HIF1A function by sequestering HIF1AN away from HIF1A. Required for the THBS4 function in regulating protective astrogenesis from the subventricular zone (SVZ) niche after injury. Involved in determination of left/right symmetry by modulating the balance between motile and immotile (sensory) cilia at the left-right organiser (LRO). This Mus musculus (Mouse) protein is Neurogenic locus notch homolog protein 1 (Notch1).